Consider the following 641-residue polypeptide: MTRTTVEPIKYEAPSWEHKSVHVSDDHRRIIPNVGDDATRPKGRIRRSMTACNTCRKLKTRCDLDPRGHACRRCLSLRIDCQLPETSERFQDSTPMWSDATTAIPSIEERLTSLERSMREMTGMLRQILNQSPSVSNISVPPLARSVHTEETASIEGNSFGPFLPKPVRLIQDLQSEFFGETNRIPVESPFLGNSFEKGILDSKLSLKLVQLFVDNFGPLVSINNQSDFHNEMRNTDSLLYSTACLLASRYVPGIPPPIVHTMNLQVRHKAVNLLWEKPPLKYESLQALALLCLWPAAGQKEFPIDGWLLSGTAINHALVSFDFLNHVPSELLIDNDIAAQLRLWNAFCLTQLHFAVGNARPFHLPQRYLDYCPRLLEHPAATVEDGKVVAEIQLYLITLRLQANEQRMRFAEVEYEEIERWKVEWAHLLGKVKQRGPSRINANYSTAGDENSTFELSLWFCQILLHRTAMRFQAESERLTSEILQGSRLIISKFLQLRFVTALRVVDQAYFIVGYAALNLCDFNFLDPLIDQIQMFLLHLSPNEDHIAYRFSCMIAEFKRRCAECNDPCSAVDGSQCSFGDARKMSMEQVQFVPPLVDSMIGGYSALEQLIPEVMPHSFPESVISGMAVTEAIPVGSAPY.

The zn(2)-C6 fungal-type DNA-binding region spans 52 to 81 (CNTCRKLKTRCDLDPRGHACRRCLSLRIDC).

Belongs to the prtT family.

It localises to the nucleus. Its function is as follows. Transcription factor required for protein utilization and degradation. Regulates transcription of major secreted proteases including a serine alkaline protease (alp1) and a metalloprotease (NpI). This chain is Transcriptional activator of proteases prtT (prtT), found in Aspergillus oryzae (strain ATCC 42149 / RIB 40) (Yellow koji mold).